Consider the following 532-residue polypeptide: 2,3-bisphosphoglycerate-independent phosphoglycerate mutase (532 aa).

Mn(2+) contacts are provided by aspartate 15 and serine 65. Residue serine 65 is the Phosphoserine intermediate of the active site. Substrate contacts are provided by residues histidine 126, 156–157, arginine 188, arginine 194, 258–261, and lysine 331; these read RD and RPDR. Residues aspartate 398, histidine 402, aspartate 439, histidine 440, and histidine 457 each contribute to the Mn(2+) site.

The protein belongs to the BPG-independent phosphoglycerate mutase family. Monomer. Mn(2+) is required as a cofactor.

The enzyme catalyses (2R)-2-phosphoglycerate = (2R)-3-phosphoglycerate. It participates in carbohydrate degradation; glycolysis; pyruvate from D-glyceraldehyde 3-phosphate: step 3/5. In terms of biological role, catalyzes the interconversion of 2-phosphoglycerate and 3-phosphoglycerate. The chain is 2,3-bisphosphoglycerate-independent phosphoglycerate mutase from Synechococcus elongatus (strain ATCC 33912 / PCC 7942 / FACHB-805) (Anacystis nidulans R2).